Reading from the N-terminus, the 96-residue chain is UPF0235 protein VV1_1522 (96 aa).

Belongs to the UPF0235 family.

The protein is UPF0235 protein VV1_1522 of Vibrio vulnificus (strain CMCP6).